The sequence spans 592 residues: Protein phosphatase EYA1 (592 aa).

Disordered stretches follow at residues 1 to 95 and 240 to 320; these read MEMQ…RPYP and MTSS…PDSD. Positions 8-26 are enriched in low complexity; that stretch reads SPHSRLSGSSESPSGPKLG. Residues 28 to 63 are compositionally biased toward polar residues; sequence SHINSNSMTPNGTEVKTEPMSSSETASTTADGSLNN. 2 stretches are compositionally biased toward low complexity: residues 64–75 and 241–253; these read FSGSAIGSSSFS and TSSN…PSTN. The span at 254–287 shows a compositional bias: polar residues; it reads ATYQLQEPPSGITSQAVTDPTAEYSTIHSPSTPI. Residues 288–303 are compositionally biased toward basic and acidic residues; it reads KDSDSDRLRRGSDGKS. Asp328 acts as the Nucleophile in catalysis. Mg(2+) is bound by residues Asp328, Asp330, and Asp556. Asp330 acts as the Proton donor in catalysis.

This sequence belongs to the HAD-like hydrolase superfamily. EYA family. As to quaternary structure, probably interacts with SIX2, SIX4 and SIX5. Interacts with H2AX in response to DNA damage. Interacts with SIX3; promotes EYA1 translocation to the nucleus. The cofactor is Mg(2+). Post-translationally, sumoylated with SUMO1. In terms of tissue distribution, in the embryo, highly expressed in kidney with lower levels in brain. Weakly expressed in lung. In the adult, highly expressed in heart and skeletal muscle. Weakly expressed in brain and liver. No expression in eye or kidney.

The protein localises to the cytoplasm. It is found in the nucleus. It catalyses the reaction O-phospho-L-tyrosyl-[protein] + H2O = L-tyrosyl-[protein] + phosphate. It carries out the reaction O-phospho-L-seryl-[protein] + H2O = L-seryl-[protein] + phosphate. The catalysed reaction is O-phospho-L-threonyl-[protein] + H2O = L-threonyl-[protein] + phosphate. Its function is as follows. Functions both as protein phosphatase and as transcriptional coactivator for SIX1, and probably also for SIX2, SIX4 and SIX5. Tyrosine phosphatase that dephosphorylates 'Tyr-142' of histone H2AX (H2AXY142ph) and promotes efficient DNA repair via the recruitment of DNA repair complexes containing MDC1. 'Tyr-142' phosphorylation of histone H2AX plays a central role in DNA repair and acts as a mark that distinguishes between apoptotic and repair responses to genotoxic stress. Its function as histone phosphatase may contribute to its function in transcription regulation during organogenesis. Also has phosphatase activity with proteins phosphorylated on Ser and Thr residues (in vitro). Required for normal embryonic development of the craniofacial and trunk skeleton, kidneys and ears. Together with SIX1, it plays an important role in hypaxial muscle development; in this it is functionally redundant with EYA2. This is Protein phosphatase EYA1 (EYA1) from Homo sapiens (Human).